A 464-amino-acid chain; its full sequence is Cerebellar degeneration-related protein 2-like (464 aa).

Coiled-coil stretches lie at residues 31-154 (AAEL…RRKT), 201-264 (VSSL…KSRV), and 342-379 (MSIL…AEVQ). The tract at residues 371-419 (ESLRHAEVQTSRPVSRDPSMKECRVAEPQQPPPTPPQTPSTPEALEGIS) is disordered. Over residues 384–395 (VSRDPSMKECRV) the composition is skewed to basic and acidic residues. Over residues 399-409 (QQPPPTPPQTP) the composition is skewed to pro residues.

It belongs to the CDR2 family.

The sequence is that of Cerebellar degeneration-related protein 2-like (cdr2l) from Danio rerio (Zebrafish).